We begin with the raw amino-acid sequence, 256 residues long: PGL/p-HBAD biosynthesis glycosyltransferase Mb2981 (256 aa).

It belongs to the glycosyltransferase 2 family.

In terms of biological role, involved in glycosylation steps downstream of mono-O-methyl-glycosyl-p-hydroxybenzoic acid derivative (p-HBAD I) and 2-O-methyl-rhamnosyl-phenolphthiocerol dimycocerosate (mycoside B) during the p-hydroxybenzoic acid derivatives (p-HBAD) and glycosylated phenolphthiocerol dimycocerosates (PGL) biosynthesis. In Mycobacterium bovis (strain ATCC BAA-935 / AF2122/97), this protein is PGL/p-HBAD biosynthesis glycosyltransferase Mb2981.